The primary structure comprises 214 residues: Reticulon-3-B (214 aa).

The interval 1 to 22 is disordered; sequence MAETSGPQSSHISSSSAGDKGS. The Reticulon domain occupies 26–214; sequence VRDLLYWRDV…LPGALKKKSE (189 aa). 2 helical membrane passes run 46 to 66 and 150 to 170; these read MVLL…YLVL and TYIG…LLAF.

In terms of assembly, homodimer.

It localises to the endoplasmic reticulum membrane. The protein resides in the golgi apparatus membrane. Functionally, may be involved in membrane trafficking in the early secretory pathway. The chain is Reticulon-3-B (rtn3-b) from Xenopus laevis (African clawed frog).